Consider the following 149-residue polypeptide: MNPKRKQRLIIVSFLVIGVSATVGLIMAALSSNVNHFYNPTEVAQGAAPVDKSIRVGGMVVDGSVSRDGQSLAVAFTVTDYNSNVDVKYTGILPDLFREGQGIVATGKLDAQGVFQAEEVLAKHDEKYMPPEVQRALDKAQDAAPAQTY.

Over 1 to 8 (MNPKRKQR) the chain is Cytoplasmic. A helical; Signal-anchor for type II membrane protein membrane pass occupies residues 9–29 (LIIVSFLVIGVSATVGLIMAA). Residues 30 to 149 (LSSNVNHFYN…AQDAAPAQTY (120 aa)) are Periplasmic-facing. Heme-binding residues include His-124 and Tyr-128.

This sequence belongs to the CcmE/CycJ family.

Its subcellular location is the cell inner membrane. Functionally, heme chaperone required for the biogenesis of c-type cytochromes. Transiently binds heme delivered by CcmC and transfers the heme to apo-cytochromes in a process facilitated by CcmF and CcmH. This chain is Cytochrome c-type biogenesis protein CcmE, found in Hahella chejuensis (strain KCTC 2396).